Consider the following 250-residue polypeptide: Cruxrhodopsin-3 (250 aa).

The Extracellular segment spans residues 1-9 (MPAPEGEAI). Residues 10–27 (WLWLGTAGMFLGMLYFIA) form a helical membrane-spanning segment. Residues 28 to 41 (RGWGETDSRRQKFY) lie on the Cytoplasmic side of the membrane. The chain crosses the membrane as a helical span at residues 42–60 (IATILITAIAFVNYLAMAL). Residues 61 to 77 (GFGLTIVEIAGEQRPIY) are Extracellular-facing. A helical transmembrane segment spans residues 78 to 94 (WARYSDWLFTTPLLLYD). The Cytoplasmic portion of the chain corresponds to 95–105 (LGLLAGADRNT). A helical transmembrane segment spans residues 106 to 125 (ISSLVSLDVLMIGTGLVATL). Residues 126–138 (SAGSGVLSAGAER) lie on the Extracellular side of the membrane. Residues 139 to 158 (LVWWGISTAFLLVLLYFLFS) traverse the membrane as a helical segment. Over 159-176 (SLSGRVADLPSDTRSTFK) the chain is Cytoplasmic. A helical membrane pass occupies residues 177–195 (TLRNLVTVVWLVYPVWWLV). The Extracellular segment spans residues 196-207 (GTEGIGLVGIGI). The chain crosses the membrane as a helical span at residues 208–227 (ETAGFMVIDLVAKVGFGIIL). N6-(retinylidene)lysine is present on lysine 220. Residues 228 to 250 (LRSHGVLDGAAETTGAGATATAD) are Cytoplasmic-facing.

Belongs to the archaeal/bacterial/fungal opsin family. In terms of assembly, homotrimer. Binds bacterioruberin in the crevice between neighboring subunits.

It localises to the cell membrane. Light-driven proton pump. In Haloarcula vallismortis (Halobacterium vallismortis), this protein is Cruxrhodopsin-3 (cop3).